Reading from the N-terminus, the 530-residue chain is Vesicular acetylcholine transporter (530 aa).

The Cytoplasmic segment spans residues 1–33 (MEPTAPTGQARAAATKLSEAVGAALQEPQRQRR). The helical transmembrane segment at 34-54 (LVLVIVCVALLLDNMLYMVIV) threads the bilayer. The Lumenal, vesicle portion of the chain corresponds to 55–125 (PIVPDYIAHM…PTESEDVKIG (71 aa)). Asn89 and Asn96 each carry an N-linked (GlcNAc...) asparagine glycan. The helical transmembrane segment at 126 to 146 (VLFASKAILQLLVNPLSGPFI) threads the bilayer. Over 147 to 152 (DRMSYD) the chain is Cytoplasmic. A helical membrane pass occupies residues 153 to 173 (VPLLIGLGVMFASTVMFAFAE). The Lumenal, vesicle segment spans residues 174 to 182 (DYATLFAAR). The chain crosses the membrane as a helical span at residues 183–203 (SLQGLGSAFADTSGIAMIADK). The Cytoplasmic segment spans residues 204–213 (YPEEPERSRA). The helical transmembrane segment at 214–234 (LGVALAFISFGSLVAPPFGGI) threads the bilayer. The Lumenal, vesicle segment spans residues 235–242 (LYEFAGKR). The helical transmembrane segment at 243-263 (VPFLVLAAVSLFDALLLLAVA) threads the bilayer. Topologically, residues 264-289 (KPFSAAARARANLPVGTPIHRLMLDP) are cytoplasmic. The helical transmembrane segment at 290 to 310 (YIAVVAGALTTCNIPLAFLEP) threads the bilayer. Residues 311–325 (TIATWMKHTMAASEW) lie on the Lumenal, vesicle side of the membrane. Residues 326–346 (EMGMVWLPAFVPHVLGVYLTV) traverse the membrane as a helical segment. Residues 347–356 (RLAARYPHLQ) lie on the Cytoplasmic side of the membrane. The helical transmembrane segment at 357 to 377 (WLYGALGLAVIGVSSCVVPAC) threads the bilayer. At 378-388 (RSFAPLVVSLC) the chain is on the lumenal, vesicle side. The helical transmembrane segment at 389-409 (GLCFGIALVDTALLPTLAFLV) threads the bilayer. Residues 410-422 (DVRHVSVYGSVYA) lie on the Cytoplasmic side of the membrane. The chain crosses the membrane as a helical span at residues 423 to 443 (IADISYSVAYALGPIVAGHIV). At 444 to 447 (HSLG) the chain is on the lumenal, vesicle side. The helical transmembrane segment at 448–468 (FEQLSLGMGLANLLYAPVLLL) threads the bilayer. The Cytoplasmic portion of the chain corresponds to 469–530 (LRNVGLLTRS…EDDYNYYSRS (62 aa)). The mediates interaction with SEC14L1 stretch occupies residues 471-530 (NVGLLTRSRSERDVLLDEPPQGLYDAVRLREVQGKDGGEPCSPPGPFDGCEDDYNYYSRS). The segment at 504-530 (GKDGGEPCSPPGPFDGCEDDYNYYSRS) is disordered.

The protein belongs to the major facilitator superfamily. Vesicular transporter family. Interacts with SEC14L1. As to expression, high expression in all major cholinergic cell groups, including peripheral postganglionic parasympathetic cells, preganglionic sympathetic and parasympathetic cells, ventral spinal cord and brainstem motoneurons, cell groups in the basal forebrain, the habenula and the corpus striatum. Weakly expressed in the cortex and hippocampus.

The protein localises to the cytoplasmic vesicle. It localises to the secretory vesicle. It is found in the synaptic vesicle membrane. It carries out the reaction acetylcholine(out) + 2 H(+)(in) = acetylcholine(in) + 2 H(+)(out). It catalyses the reaction choline(in) + 2 H(+)(out) = choline(out) + 2 H(+)(in). The catalysed reaction is serotonin(in) + 2 H(+)(out) = serotonin(out) + 2 H(+)(in). Its activity is regulated as follows. Potently inhibited by L-vesamicol. Its function is as follows. Electrogenic antiporter that exchanges one cholinergic neurotransmitter, acetylcholine or choline, with two intravesicular protons across the membrane of synaptic vesicles. Uses the electrochemical proton gradient established by the V-type proton-pump ATPase to store neurotransmitters inside the vesicles prior to their release via exocytosis. Determines cholinergic vesicular quantal size at presynaptic nerve terminals in developing neuro-muscular junctions with an impact on motor neuron differentiation and innervation pattern. Part of forebrain cholinergic system, regulates hippocampal synapse transmissions that underlie spatial memory formation. Can transport serotonin. The polypeptide is Vesicular acetylcholine transporter (Slc18a3) (Rattus norvegicus (Rat)).